Consider the following 488-residue polypeptide: GTPase Der (488 aa).

EngA-type G domains are found at residues 3–166 (PVVA…AEAM) and 199–372 (IKLA…DSAT). GTP-binding positions include 9 to 16 (GRPNVGKS), 56 to 60 (DTGGI), 118 to 121 (NKID), 205 to 212 (GKPNVGKS), 252 to 256 (DTAGV), and 317 to 320 (NKWD). The KH-like domain occupies 373–457 (RRVSTSMLTR…PIQLRFQEGD (85 aa)).

Belongs to the TRAFAC class TrmE-Era-EngA-EngB-Septin-like GTPase superfamily. EngA (Der) GTPase family. In terms of assembly, associates with the 50S ribosomal subunit.

Functionally, GTPase that plays an essential role in the late steps of ribosome biogenesis. The sequence is that of GTPase Der from Shewanella sp. (strain ANA-3).